We begin with the raw amino-acid sequence, 589 residues long: 3-(3-hydroxy-phenyl)propionate/3-hydroxycinnamic acid hydroxylase (589 aa).

FAD is bound by residues 15-44 and 283-293; these read DVLI…VAEK and FRVDRILLAGD.

Belongs to the PheA/TfdB FAD monooxygenase family. Requires FAD as cofactor.

It carries out the reaction 3-(3-hydroxyphenyl)propanoate + NADH + O2 + H(+) = 3-(2,3-dihydroxyphenyl)propanoate + NAD(+) + H2O. It catalyses the reaction (2E)-3-(3-hydroxyphenyl)prop-2-enoate + NADH + O2 + H(+) = (2E)-3-(2,3-dihydroxyphenyl)prop-2-enoate + NAD(+) + H2O. It participates in aromatic compound metabolism; 3-phenylpropanoate degradation. Catalyzes the insertion of one atom of molecular oxygen into position 2 of the phenyl ring of 3-(3-hydroxyphenyl)propionate (3-HPP) and hydroxycinnamic acid (3HCI). The sequence is that of 3-(3-hydroxy-phenyl)propionate/3-hydroxycinnamic acid hydroxylase from Comamonas testosteroni (Pseudomonas testosteroni).